The primary structure comprises 143 residues: 3-dehydroquinate dehydratase (143 aa).

Tyrosine 22 functions as the Proton acceptor in the catalytic mechanism. Residues asparagine 73, histidine 79, and aspartate 86 each contribute to the substrate site. Histidine 99 acts as the Proton donor in catalysis. Residues 100–101 and arginine 110 contribute to the substrate site; that span reads IS.

Belongs to the type-II 3-dehydroquinase family. In terms of assembly, homododecamer.

It catalyses the reaction 3-dehydroquinate = 3-dehydroshikimate + H2O. It functions in the pathway metabolic intermediate biosynthesis; chorismate biosynthesis; chorismate from D-erythrose 4-phosphate and phosphoenolpyruvate: step 3/7. In terms of biological role, catalyzes a trans-dehydration via an enolate intermediate. In Salinispora arenicola (strain CNS-205), this protein is 3-dehydroquinate dehydratase.